The chain runs to 270 residues: MVNKLSNLIKEMRNRTNLGILECKKALLENNENIELAIQFIKKSGTLNIEKNVNNLSNGIVLAKVKKEKKYGALIELNSETDFVAKNKQFQNFGKEIISIILKEKISDIDILRKFMKEKISYFSLTFKEKINIKRIKLFYGKNLFNYIHLKRIGVIVDIKNSTEDMSKKIAMHIAASNPKYISVKSIPNIIKENEKMIYIKSALKNGKTKEIAEKISNGKMKKFFEKIALEEQFFIFDDTKKIKNIINERNIYIKKFIRFEVGENFYPVI.

Positions 81–84 are involved in Mg(2+) ion dislocation from EF-Tu; that stretch reads TDFV.

Belongs to the EF-Ts family.

The protein resides in the cytoplasm. In terms of biological role, associates with the EF-Tu.GDP complex and induces the exchange of GDP to GTP. It remains bound to the aminoacyl-tRNA.EF-Tu.GTP complex up to the GTP hydrolysis stage on the ribosome. The chain is Elongation factor Ts from Wigglesworthia glossinidia brevipalpis.